Here is a 126-residue protein sequence, read N- to C-terminus: Large ribosomal subunit protein bL12 (126 aa).

Belongs to the bacterial ribosomal protein bL12 family. As to quaternary structure, homodimer. Part of the ribosomal stalk of the 50S ribosomal subunit. Forms a multimeric L10(L12)X complex, where L10 forms an elongated spine to which 2 to 4 L12 dimers bind in a sequential fashion. Binds GTP-bound translation factors.

Forms part of the ribosomal stalk which helps the ribosome interact with GTP-bound translation factors. Is thus essential for accurate translation. This Tropheryma whipplei (strain TW08/27) (Whipple's bacillus) protein is Large ribosomal subunit protein bL12.